We begin with the raw amino-acid sequence, 493 residues long: Probable phospho-2-dehydro-3-deoxyheptonate aldolase, chloroplastic (493 aa).

Residues 1–58 (MAMSNTSALASKLLPSCKPHQPTLTFFSPSTTCQKKPRSSRPISAAVHVTQPPKTPIS) constitute a chloroplast transit peptide.

This sequence belongs to the class-II DAHP synthase family.

It is found in the plastid. Its subcellular location is the chloroplast. It carries out the reaction D-erythrose 4-phosphate + phosphoenolpyruvate + H2O = 7-phospho-2-dehydro-3-deoxy-D-arabino-heptonate + phosphate. It functions in the pathway metabolic intermediate biosynthesis; chorismate biosynthesis; chorismate from D-erythrose 4-phosphate and phosphoenolpyruvate: step 1/7. The polypeptide is Probable phospho-2-dehydro-3-deoxyheptonate aldolase, chloroplastic (DHS1) (Catharanthus roseus (Madagascar periwinkle)).